The following is a 137-amino-acid chain: Protein Turandot X (137 aa).

An N-terminal signal peptide occupies residues 1–24 (MRVPVFQLSCLLGLIVCLLCSVKA).

It belongs to the Turandot family.

It localises to the secreted. Functionally, a humoral factor that may play a role in stress tolerance. This Drosophila pseudoobscura pseudoobscura (Fruit fly) protein is Protein Turandot X.